The chain runs to 414 residues: Na(+)/H(+) antiporter NhaA (414 aa).

A run of 11 helical transmembrane segments spans residues 22–42 (VGGF…NSPF), 61–81 (LHLT…FFVV), 101–121 (MLPI…YAAF), 131–151 (GWGI…AVVG), 171–191 (LGAI…LPLI), 215–235 (SAAL…WALV), 239–259 (GVHA…VPLA), 281–301 (VLPV…LGAV), 308–328 (LGII…GSWV), 343–363 (WIDI…SLLI), and 379–399 (KAGV…VLAV).

The protein belongs to the NhaA Na(+)/H(+) (TC 2.A.33) antiporter family.

Its subcellular location is the cell membrane. The catalysed reaction is Na(+)(in) + 2 H(+)(out) = Na(+)(out) + 2 H(+)(in). Na(+)/H(+) antiporter that extrudes sodium in exchange for external protons. The sequence is that of Na(+)/H(+) antiporter NhaA from Thermobifida fusca (strain YX).